We begin with the raw amino-acid sequence, 896 residues long: Vacuolar zinc transporter TgZnT (896 aa).

Residues 1 to 472 are Cytoplasmic-facing; the sequence is MPFSCFVFSQ…ETGTQRARRK (472 aa). The segment covering 82 to 91 has biased composition (basic and acidic residues); that stretch reads VLSSRGDESV. Disordered regions lie at residues 82–104, 205–227, and 255–329; these read VLSSRGDESVRSPQGRQVHSPGF, MKEIPSPRSRSPSDPDSSSRPCA, and SSSC…SSAS. 2 stretches are compositionally biased toward low complexity: residues 210–225 and 255–266; these read SPRSRSPSDPDSSSRP and SSSCCSRSNSSS. Basic and acidic residues predominate over residues 303-322; the sequence is VHERRAEATCCAPRDRHGGD. A helical membrane pass occupies residues 473 to 493; sequence LVMASMVCCVFMFVEIVAGVL. At 494-502 the chain is on the vacuolar side; sequence ANSLALMTD. The chain crosses the membrane as a helical span at residues 503-523; it reads ASHLLSDLCAFLISLFALWVS. Topologically, residues 524–539 are cytoplasmic; it reads ELKGNPSMSFGYHRAE. Residues 540–560 traverse the membrane as a helical segment; it reads ILGALLSVFLIWVLTAVLIYA. Residues 561-573 lie on the Vacuolar side of the membrane; it reads ACFRLVDPPQVDG. A helical membrane pass occupies residues 574-594; the sequence is ELMFWTALLGTLANLFMTHIL. The Cytoplasmic segment spans residues 595 to 737; the sequence is KVHSHGIGQV…YENMNLRAAY (143 aa). Residues 621–707 form a disordered region; that stretch reads LQASSSSPEK…RPFSASSAGS (87 aa). Basic and acidic residues predominate over residues 656-680; it reads RDAEAGRDAEAGRDAEAGRDAETGR. Residues 738–758 traverse the membrane as a helical segment; it reads IHALGDLLQNIGVMIASALIW. The Vacuolar portion of the chain corresponds to 759-762; the sequence is WRPD. The chain crosses the membrane as a helical span at residues 763-783; it reads WAIADPICTFIFSIFVLFTTL. Residues 784–896 are Cytoplasmic-facing; that stretch reads SILKEALNVL…CSDPMKVFRR (113 aa).

Belongs to the cation diffusion facilitator (CDF) transporter (TC 2.A.4) family. SLC30A subfamily.

It is found in the vacuole membrane. The protein resides in the cytoplasmic vesicle membrane. Vacuolar zinc transporter that is probably involved in the transfer of zinc ions from the cytosol to the vacuole for intracellular storage. Plays an essential role in extracellular zinc tolerance. This is Vacuolar zinc transporter TgZnT from Toxoplasma gondii (strain ATCC 50853 / GT1).